The sequence spans 96 residues: Elicitor peptide 3 (96 aa).

Residues 1–73 constitute a propeptide that is removed on maturation; that stretch reads MENLRNGEDN…EEEEEDGMTI (73 aa). Positions 32–96 are disordered; the sequence is SGLESSSSSS…PSSGKGGKHN (65 aa). Low complexity predominate over residues 35–49; the sequence is ESSSSSSSSCDLSSS. A compositionally biased stretch (acidic residues) spans 52 to 71; the sequence is EEDESIDIKEEEEEEEEDGM.

The protein belongs to the brassicaceae elicitor peptide family.

Functionally, elicitor of plant defense. This is Elicitor peptide 3 (PEP3) from Arabidopsis thaliana (Mouse-ear cress).